The following is a 479-amino-acid chain: CBL-interacting serine/threonine-protein kinase 10 (479 aa).

The region spanning 12 to 266 (YDVGRLLGQG…IARIRESSWF (255 aa)) is the Protein kinase domain. ATP is bound by residues 18-26 (LGQGTFAKV) and K41. The active-site Proton acceptor is the D134. The segment at 152 to 181 (DFGLSALADCKRQDGLLHTTCGTPAYVAPE) is activation loop. S156 carries the phosphoserine modification. At T170 the chain carries Phosphothreonine. The segment at 286–323 (SVEAGTAGTNENGAGPSENGAGPSENGDRVTEENHTDE) is disordered. The span at 288 to 300 (EAGTAGTNENGAG) shows a compositional bias: low complexity. The segment covering 311–323 (NGDRVTEENHTDE) has biased composition (basic and acidic residues). The NAF domain maps to 322–346 (DEPTNLNAFDLIALSAGFDLAGLFG). The interval 350 to 379 (KRESRFTSQKPASVIISKLEEVAQRLKLSI) is PPI. The disordered stretch occupies residues 456-479 (SQQETEYQQQQQQEQQEQEEPLKF). Low complexity predominate over residues 457-470 (QQETEYQQQQQQEQ).

Belongs to the protein kinase superfamily. CAMK Ser/Thr protein kinase family. SNF1 subfamily. Interacts with CBL4/SOS3. Requires Mn(2+) as cofactor. As to expression, mostly expressed in roots.

The enzyme catalyses L-seryl-[protein] + ATP = O-phospho-L-seryl-[protein] + ADP + H(+). The catalysed reaction is L-threonyl-[protein] + ATP = O-phospho-L-threonyl-[protein] + ADP + H(+). Functionally, CIPK serine-threonine protein kinases interact with CBL proteins. Binding of a CBL protein to the regulatory NAF domain of CIPK protein lead to the activation of the kinase in a calcium-dependent manner. The protein is CBL-interacting serine/threonine-protein kinase 10 (CIPK10) of Arabidopsis thaliana (Mouse-ear cress).